Consider the following 157-residue polypeptide: Monooxygenase CPUR_05417 (157 aa).

It belongs to the avfA family.

The protein operates within secondary metabolite biosynthesis. Functionally, monooxygenase; part of the ergochrome gene cluster responsible for the typical purple-black color of the ergot sclerotia. The ergochrome gene cluster produces several ergot pigments including the yellow ergochrome secalonic acid and its derivatives, as well as the red anthraquinones endocrocin and clavorubin. The pathway begins with the synthesis of atrochrysone thioester by the polyketide synthase (PKS) CPUR_05437. The atrochrysone carboxyl ACP thioesterase CPUR_05436 then breaks the thioester bond and releases the atrochrysone carboxylic acid from CPUR_05437. The atrochrysone carboxylic acid is then converted to atrochrysone which is further transformed into emodin anthrone. The next step is performed by the anthrone oxygenase CPUR_05434 that catalyzes the oxidation of emodinanthrone to emodin. Emodin is further modified to yield monodictyphenone via several steps involving CPUR_05427, CPUR_05428, CPUR_05429 and CPUR_05430. The short chain dehydrogenase/reductase CPUR_05418 then catalyzes the C-5 ketoreduction to give the xanthone skeleton of the monomeric units. Ergochromes formation requires further dimerization steps of different xanthone units, probably catalyzed by the cytochrome P450 monooxygenase CPUR_05419. CPUR_05425, CPUR_05426 and CPUR_05431 are unique to Claviceps, thus it is likely that they are involved in further modification of xanthone units or in their dimerization. The yellow ergochromes and the red anthraquinone pigments endocrocin and clavorubin are products from the same PKS derived precursors and the latter are likely shunt products in the pathway of xanthone biosynthesis. It is proposed that atrochrysone carboxylic acid released from the PKS CPUR_05437 can also be converted to endocrocin anthrone which is further oxidized into endocrocin by CPUR_05435. Endocrocin could be then modified to clavorubin, possibly by CPUR_05423 and CPUR_05431. Clavorubin is the principal anthraquinone metabolite produced by the cluster with a much higher yield compared to endocrocin. This chain is Monooxygenase CPUR_05417, found in Claviceps purpurea (strain 20.1) (Ergot fungus).